Here is a 387-residue protein sequence, read N- to C-terminus: Ferrochelatase (387 aa).

H196 and E277 together coordinate Fe cation.

This sequence belongs to the ferrochelatase family.

The protein resides in the cytoplasm. The enzyme catalyses heme b + 2 H(+) = protoporphyrin IX + Fe(2+). It functions in the pathway porphyrin-containing compound metabolism; protoheme biosynthesis; protoheme from protoporphyrin-IX: step 1/1. Catalyzes the ferrous insertion into protoporphyrin IX. The sequence is that of Ferrochelatase from Trichodesmium erythraeum (strain IMS101).